Reading from the N-terminus, the 98-residue chain is MTSTFIITITIFYLGLLGILINRLHFLSILLCLELLLISLFLSLTVWAINANTTFLLTNNLILLTLSACEASAGLSLMVALSRTHNSDLVSTINILQQ.

3 helical membrane-spanning segments follow: residues 1–21 (MTSTFIITITIFYLGLLGILI), 29–49 (ILLCLELLLISLFLSLTVWAI), and 61–81 (LILLTLSACEASAGLSLMVAL).

Belongs to the complex I subunit 4L family.

The protein localises to the mitochondrion membrane. The enzyme catalyses a ubiquinone + NADH + 5 H(+)(in) = a ubiquinol + NAD(+) + 4 H(+)(out). Core subunit of the mitochondrial membrane respiratory chain NADH dehydrogenase (Complex I) that is believed to belong to the minimal assembly required for catalysis. Complex I functions in the transfer of electrons from NADH to the respiratory chain. The immediate electron acceptor for the enzyme is believed to be ubiquinone. This Patiria pectinifera (Starfish) protein is NADH-ubiquinone oxidoreductase chain 4L (ND4L).